A 229-amino-acid chain; its full sequence is GTP cyclohydrolase 1 (229 aa).

Residues methionine 1–proline 31 form a disordered region. Residues asparagine 7–leucine 16 show a composition bias toward polar residues. Zn(2+) is bound by residues cysteine 117, histidine 120, and cysteine 188.

This sequence belongs to the GTP cyclohydrolase I family. In terms of assembly, toroid-shaped homodecamer, composed of two pentamers of five dimers.

The catalysed reaction is GTP + H2O = 7,8-dihydroneopterin 3'-triphosphate + formate + H(+). The protein operates within cofactor biosynthesis; 7,8-dihydroneopterin triphosphate biosynthesis; 7,8-dihydroneopterin triphosphate from GTP: step 1/1. The sequence is that of GTP cyclohydrolase 1 from Rhodopirellula baltica (strain DSM 10527 / NCIMB 13988 / SH1).